The chain runs to 318 residues: Endochitinase 1 (318 aa).

An N-terminal signal peptide occupies residues glutamate 1–alanine 18. The Chitin-binding type-1 domain occupies glutamate 19 to glycine 60. Disulfide bonds link cysteine 21/cysteine 36, cysteine 30/cysteine 42, cysteine 35/cysteine 49, cysteine 54/cysteine 58, cysteine 89/cysteine 152, cysteine 164/cysteine 172, and cysteine 271/cysteine 303. The active-site Proton donor is glutamate 134. The propeptide at glycine 312–methionine 318 is removed in mature form, vacuolar targeting.

Belongs to the glycosyl hydrolase 19 family. Chitinase class I subfamily.

The protein localises to the vacuole. It carries out the reaction Random endo-hydrolysis of N-acetyl-beta-D-glucosaminide (1-&gt;4)-beta-linkages in chitin and chitodextrins.. Functionally, defense against chitin-containing fungal pathogens. This is Endochitinase 1 (CHTB1) from Solanum tuberosum (Potato).